Here is a 92-residue protein sequence, read N- to C-terminus: Probable glutathione transferase (92 aa).

In terms of domain architecture, GST N-terminal spans 1–71 (RTCPYAQRAR…YLEEAFPDPP (71 aa)). The active-site Nucleophile is the Cys3. Residues Lys30, Val43, and 55-56 (ES) contribute to the glutathione site.

It belongs to the GST superfamily. Omega family.

The catalysed reaction is RX + glutathione = an S-substituted glutathione + a halide anion + H(+). The enzyme catalyses L-dehydroascorbate + 2 glutathione = glutathione disulfide + L-ascorbate. It carries out the reaction methylarsonate + 2 glutathione + H(+) = methylarsonous acid + glutathione disulfide + H2O. Functionally, exhibits glutathione-dependent thiol transferase activity. Has dehydroascorbate reductase activity and may contribute to the recycling of ascorbic acid. Participates in the biotransformation of inorganic arsenic and reduces monomethylarsonic acid (MMA). The chain is Probable glutathione transferase from Aplysia californica (California sea hare).